Here is a 396-residue protein sequence, read N- to C-terminus: Elongation factor Tu 1 (396 aa).

A tr-type G domain is found at 10-206; the sequence is KPHVNVGTIG…ALDSYIPLPE (197 aa). Residues 19 to 26 form a G1 region; that stretch reads GHVDHGKT. 19–26 contributes to the GTP binding site; that stretch reads GHVDHGKT. Thr-26 provides a ligand contact to Mg(2+). The G2 stretch occupies residues 60 to 64; the sequence is GITIN. The interval 81–84 is G3; the sequence is DCPG. GTP contacts are provided by residues 81 to 85 and 136 to 139; these read DCPGH and NKCD. The segment at 136–139 is G4; sequence NKCD. Residues 174-176 form a G5 region; sequence SAK.

The protein belongs to the TRAFAC class translation factor GTPase superfamily. Classic translation factor GTPase family. EF-Tu/EF-1A subfamily. Monomer.

The protein localises to the cytoplasm. It carries out the reaction GTP + H2O = GDP + phosphate + H(+). GTP hydrolase that promotes the GTP-dependent binding of aminoacyl-tRNA to the A-site of ribosomes during protein biosynthesis. The polypeptide is Elongation factor Tu 1 (Albidiferax ferrireducens (strain ATCC BAA-621 / DSM 15236 / T118) (Rhodoferax ferrireducens)).